The following is a 479-amino-acid chain: Ribosomal RNA small subunit methyltransferase F (479 aa).

S-adenosyl-L-methionine-binding positions include 125–131 (AAAPGSK), Glu149, Asp176, and Asp194. Cys247 (nucleophile) is an active-site residue.

The protein belongs to the class I-like SAM-binding methyltransferase superfamily. RsmB/NOP family.

It is found in the cytoplasm. It carries out the reaction cytidine(1407) in 16S rRNA + S-adenosyl-L-methionine = 5-methylcytidine(1407) in 16S rRNA + S-adenosyl-L-homocysteine + H(+). Specifically methylates the cytosine at position 1407 (m5C1407) of 16S rRNA. This is Ribosomal RNA small subunit methyltransferase F from Escherichia coli O17:K52:H18 (strain UMN026 / ExPEC).